Here is a 131-residue protein sequence, read N- to C-terminus: Riboflavin kinase (131 aa).

11 to 16 (GLQKAG) provides a ligand contact to CDP. Mg(2+) contacts are provided by Thr-40 and Asn-42. The FMN site is built by Thr-98 and Glu-106. 111 to 114 (EKLR) serves as a coordination point for CDP.

It belongs to the archaeal riboflavin kinase family. Mg(2+) is required as a cofactor.

The catalysed reaction is riboflavin + CTP = CDP + FMN + H(+). The protein operates within cofactor biosynthesis; FMN biosynthesis; FMN from riboflavin (CTP route): step 1/1. Functionally, catalyzes the CTP-dependent phosphorylation of riboflavin (vitamin B2) to form flavin mononucleotide (FMN). The sequence is that of Riboflavin kinase from Methanosphaera stadtmanae (strain ATCC 43021 / DSM 3091 / JCM 11832 / MCB-3).